An 86-amino-acid chain; its full sequence is MEPVDPRLEPWKHPGSQPKTACTNCYCKKCCFHCQVCFITKALGISYGRKKRRQRRRPPQGSQTHQVSLSKQPTSQSRGDPTGPKE.

The interaction with human CREBBP stretch occupies residues 1–24 (MEPVDPRLEPWKHPGSQPKTACTN). The transactivation stretch occupies residues 1–48 (MEPVDPRLEPWKHPGSQPKTACTNCYCKKCCFHCQVCFITKALGISYG). Zn(2+) contacts are provided by cysteine 22, cysteine 25, and cysteine 27. The interval 22-37 (CTNCYCKKCCFHCQVC) is cysteine-rich. N6-acetyllysine; by host PCAF is present on lysine 28. Positions 30, 33, 34, and 37 each coordinate Zn(2+). A core region spans residues 38–48 (FITKALGISYG). Over residues 48–58 (GRKKRRQRRRP) the composition is skewed to basic residues. Residues 48 to 86 (GRKKRRQRRRPPQGSQTHQVSLSKQPTSQSRGDPTGPKE) form a disordered region. Positions 49–57 (RKKRRQRRR) match the Nuclear localization signal, RNA-binding (TAR), and protein transduction motif. The tract at residues 49–86 (RKKRRQRRRPPQGSQTHQVSLSKQPTSQSRGDPTGPKE) is interaction with the host capping enzyme RNGTT. 2 positions are modified to N6-acetyllysine; by host EP300 and GCN5L2: lysine 50 and lysine 51. Asymmetric dimethylarginine; by host PRMT6 occurs at positions 52 and 53. Polar residues predominate over residues 62-79 (SQTHQVSLSKQPTSQSRG). Residue lysine 71 forms a Glycyl lysine isopeptide (Lys-Gly) (interchain with G-Cter in ubiquitin) linkage. The Cell attachment site motif lies at 78–80 (RGD).

The protein belongs to the lentiviruses Tat family. In terms of assembly, interacts with host CCNT1. Associates with the P-TEFb complex composed at least of Tat, P-TEFb (CDK9 and CCNT1), TAR RNA, RNA Pol II. Recruits the HATs CREBBP, TAF1/TFIID, EP300, PCAF and GCN5L2. Interacts with host KAT5/Tip60; this interaction targets the latter to degradation. Interacts with the host deacetylase SIRT1. Interacts with host capping enzyme RNGTT; this interaction stimulates RNGTT. Binds to host KDR, and to the host integrins ITGAV/ITGB3 and ITGA5/ITGB1. Interacts with host KPNB1/importin beta-1 without previous binding to KPNA1/importin alpha-1. Interacts with EIF2AK2. Interacts with host nucleosome assembly protein NAP1L1; this interaction may be required for the transport of Tat within the nucleus, since the two proteins interact at the nuclear rim. Interacts with host C1QBP/SF2P32; this interaction involves lysine-acetylated Tat. Interacts with the host chemokine receptors CCR2, CCR3 and CXCR4. Interacts with host DPP4/CD26; this interaction may trigger an anti-proliferative effect. Interacts with host LDLR. Interacts with the host extracellular matrix metalloproteinase MMP1. Interacts with host PRMT6; this interaction mediates Tat's methylation. Interacts with, and is ubiquitinated by MDM2/Hdm2. Interacts with host PSMC3 and HTATIP2. Interacts with STAB1; this interaction may overcome SATB1-mediated repression of IL2 and IL2RA (interleukin) in T cells by binding to the same domain than HDAC1. Interacts (when acetylated) with human CDK13, thereby increasing HIV-1 mRNA splicing and promoting the production of the doubly spliced HIV-1 protein Nef. Interacts with host TBP; this interaction modulates the activity of transcriptional pre-initiation complex. Interacts with host RELA. Interacts with host PLSCR1; this interaction negatively regulates Tat transactivation activity by altering its subcellular distribution. In terms of processing, asymmetrical arginine methylation by host PRMT6 seems to diminish the transactivation capacity of Tat and affects the interaction with host CCNT1. Post-translationally, acetylation by EP300, CREBBP, GCN5L2/GCN5 and PCAF regulates the transactivation activity of Tat. EP300-mediated acetylation of Lys-50 promotes dissociation of Tat from the TAR RNA through the competitive binding to PCAF's bromodomain. In addition, the non-acetylated Tat's N-terminus can also interact with PCAF. PCAF-mediated acetylation of Lys-28 enhances Tat's binding to CCNT1. Lys-50 is deacetylated by SIRT1. Polyubiquitination by host MDM2 does not target Tat to degradation, but activates its transactivation function and fosters interaction with CCNT1 and TAR RNA. In terms of processing, phosphorylated by EIF2AK2 on serine and threonine residues adjacent to the basic region important for TAR RNA binding and function. Phosphorylation of Tat by EIF2AK2 is dependent on the prior activation of EIF2AK2 by dsRNA.

It is found in the host nucleus. It localises to the host nucleolus. The protein localises to the host cytoplasm. The protein resides in the secreted. Transcriptional activator that increases RNA Pol II processivity, thereby increasing the level of full-length viral transcripts. Recognizes a hairpin structure at the 5'-LTR of the nascent viral mRNAs referred to as the transactivation responsive RNA element (TAR) and recruits the cyclin T1-CDK9 complex (P-TEFb complex) that will in turn hyperphosphorylate the RNA polymerase II to allow efficient elongation. The CDK9 component of P-TEFb and other Tat-activated kinases hyperphosphorylate the C-terminus of RNA Pol II that becomes stabilized and much more processive. Other factors such as HTATSF1/Tat-SF1, SUPT5H/SPT5, and HTATIP2 are also important for Tat's function. Besides its effect on RNA Pol II processivity, Tat induces chromatin remodeling of proviral genes by recruiting the histone acetyltransferases (HATs) CREBBP, EP300 and PCAF to the chromatin. This also contributes to the increase in proviral transcription rate, especially when the provirus integrates in transcriptionally silent region of the host genome. To ensure maximal activation of the LTR, Tat mediates nuclear translocation of NF-kappa-B by interacting with host RELA. Through its interaction with host TBP, Tat may also modulate transcription initiation. Tat can reactivate a latently infected cell by penetrating in it and transactivating its LTR promoter. In the cytoplasm, Tat is thought to act as a translational activator of HIV-1 mRNAs. Its function is as follows. Extracellular circulating Tat can be endocytosed by surrounding uninfected cells via the binding to several surface receptors such as CD26, CXCR4, heparan sulfate proteoglycans (HSPG) or LDLR. Neurons are rarely infected, but they internalize Tat via their LDLR. Through its interaction with nuclear HATs, Tat is potentially able to control the acetylation-dependent cellular gene expression. Modulates the expression of many cellular genes involved in cell survival, proliferation or in coding for cytokines or cytokine receptors. Tat plays a role in T-cell and neurons apoptosis. Tat induced neurotoxicity and apoptosis probably contribute to neuroAIDS. Circulating Tat also acts as a chemokine-like and/or growth factor-like molecule that binds to specific receptors on the surface of the cells, affecting many cellular pathways. In the vascular system, Tat binds to ITGAV/ITGB3 and ITGA5/ITGB1 integrins dimers at the surface of endothelial cells and competes with bFGF for heparin-binding sites, leading to an excess of soluble bFGF. The sequence is that of Protein Tat from Homo sapiens (Human).